The following is a 914-amino-acid chain: Protein translocase subunit SecA (914 aa).

ATP contacts are provided by residues Gln-87, Gly-105–Thr-109, and Asp-508. Zn(2+) is bound by residues Cys-898, Cys-900, Cys-909, and His-910.

It belongs to the SecA family. Monomer and homodimer. Part of the essential Sec protein translocation apparatus which comprises SecA, SecYEG and auxiliary proteins SecDF-YajC and YidC. The cofactor is Zn(2+).

It localises to the cell inner membrane. Its subcellular location is the cytoplasm. It carries out the reaction ATP + H2O + cellular proteinSide 1 = ADP + phosphate + cellular proteinSide 2.. Its function is as follows. Part of the Sec protein translocase complex. Interacts with the SecYEG preprotein conducting channel. Has a central role in coupling the hydrolysis of ATP to the transfer of proteins into and across the cell membrane, serving both as a receptor for the preprotein-SecB complex and as an ATP-driven molecular motor driving the stepwise translocation of polypeptide chains across the membrane. In Xylella fastidiosa (strain M23), this protein is Protein translocase subunit SecA.